The following is a 258-amino-acid chain: Tryptophan synthase alpha chain (258 aa).

Catalysis depends on proton acceptor residues E47 and D58.

It belongs to the TrpA family. As to quaternary structure, tetramer of two alpha and two beta chains.

It carries out the reaction (1S,2R)-1-C-(indol-3-yl)glycerol 3-phosphate + L-serine = D-glyceraldehyde 3-phosphate + L-tryptophan + H2O. The protein operates within amino-acid biosynthesis; L-tryptophan biosynthesis; L-tryptophan from chorismate: step 5/5. Its function is as follows. The alpha subunit is responsible for the aldol cleavage of indoleglycerol phosphate to indole and glyceraldehyde 3-phosphate. The chain is Tryptophan synthase alpha chain from Bacillus cereus (strain ATCC 10987 / NRS 248).